The sequence spans 684 residues: Sorbicillinoid biosynthetic cluster transcription factor 2 (684 aa).

The tract at residues 114–151 is disordered; the sequence is ISSAPSLETPPESVAASPPTVDSIPVSHHVNEDPEAEP.

The protein localises to the nucleus. Functionally, transcription factor that acts in concert with sorR1 which is a transcriptional activator of the gene cluster that mediates the biosynthesis of sorbicillinoids, a diverse group of yellow secondary metabolites that restrict growth of competing pathogenic fungi but not of bacteria. The chain is Sorbicillinoid biosynthetic cluster transcription factor 2 from Penicillium rubens (strain ATCC 28089 / DSM 1075 / NRRL 1951 / Wisconsin 54-1255) (Penicillium chrysogenum).